The chain runs to 458 residues: Morphogenetic regulator of filamentous growth protein 1 (458 aa).

The interval 401–458 (KKDSGSEPLHAKRRRNSGISPRTTTLGPNGNSNTSNEELPTSDVNDINKDMTKKKMKF) is disordered. A compositionally biased stretch (polar residues) spans 417–445 (SGISPRTTTLGPNGNSNTSNEELPTSDVN). Basic and acidic residues predominate over residues 446–458 (DINKDMTKKKMKF).

Belongs to the MFG1 family. Interacts with FLO8 and MSS11, both morphogenetic transcription factors binding directly to the FLO11 promoter.

Its subcellular location is the nucleus. Its function is as follows. Transcriptional regulator with a general role in all morphogenetically distinct forms of filamentous growth, namely haploid invasive growth, biofilm formation, and diploid pseudohyphal growth. May control FLO11 gene expression as part of a promoter-bound complex with FLO8 and MSS1. The sequence is that of Morphogenetic regulator of filamentous growth protein 1 (MFG1) from Saccharomyces cerevisiae (strain ATCC 204508 / S288c) (Baker's yeast).